Here is a 968-residue protein sequence, read N- to C-terminus: Probable transport protein MmpL2 (968 aa).

Helical transmembrane passes span 22–42 (FAVVIVLLWLGFTAFVNLAVP), 204–224 (VIAAMLLVIYRSVITAVLVLI), 245–265 (IFSLSTFATNLLVLMAIAAST), 297–317 (AHVILGSGLTIAGAMYCLSFA), 328–348 (PIAIGMLVAVLAALTLGPAVL), 378–398 (WPGPVLAATCLVASIGLLALP), 763–783 (YDLLIAGVAAISLILIIMMII), 787–807 (VVAAVVIVGTVVLSMGASFGL), 815–835 (ILGIELYWMVLAMSVILLLAV), 866–886 (TGGVVTAAGMVFAVTMSLFVF), and 890–910 (RIIGQIGTTIGLGLLFDTLVV).

It belongs to the resistance-nodulation-cell division (RND) (TC 2.A.6) family. MmpL subfamily.

Its subcellular location is the cell membrane. This is Probable transport protein MmpL2 (mmpL2) from Mycobacterium tuberculosis (strain CDC 1551 / Oshkosh).